Consider the following 23-residue polypeptide: Acidic phospholipase CHA-E6a (23 aa).

It belongs to the phospholipase A2 family. Group II subfamily. D49 sub-subfamily. Ca(2+) is required as a cofactor. Post-translationally, contains 7 disulfide bonds. In terms of tissue distribution, expressed by the venom gland.

It is found in the secreted. The catalysed reaction is a 1,2-diacyl-sn-glycero-3-phosphocholine + H2O = a 1-acyl-sn-glycero-3-phosphocholine + a fatty acid + H(+). Snake venom phospholipase A2 (PLA2) that shows high lipolytic (1048 umol/mg/min) and weak ADP-induced platelet aggregation activities. Also shows weak anticoagulant activity (IC(50) is less than 1.0 uM). PLA2 catalyzes the calcium-dependent hydrolysis of the 2-acyl groups in 3-sn-phosphoglycerides. The sequence is that of Acidic phospholipase CHA-E6a from Crotalus horridus (Timber rattlesnake).